We begin with the raw amino-acid sequence, 302 residues long: Sulfate adenylyltransferase subunit 2 (302 aa).

It belongs to the PAPS reductase family. CysD subfamily. As to quaternary structure, heterodimer composed of CysD, the smaller subunit, and CysN.

The enzyme catalyses sulfate + ATP + H(+) = adenosine 5'-phosphosulfate + diphosphate. It functions in the pathway sulfur metabolism; hydrogen sulfide biosynthesis; sulfite from sulfate: step 1/3. In terms of biological role, with CysN forms the ATP sulfurylase (ATPS) that catalyzes the adenylation of sulfate producing adenosine 5'-phosphosulfate (APS) and diphosphate, the first enzymatic step in sulfur assimilation pathway. APS synthesis involves the formation of a high-energy phosphoric-sulfuric acid anhydride bond driven by GTP hydrolysis by CysN coupled to ATP hydrolysis by CysD. The protein is Sulfate adenylyltransferase subunit 2 of Xanthomonas campestris pv. campestris (strain 8004).